We begin with the raw amino-acid sequence, 247 residues long: MAQEKMELDLEPDTSYGGTLRRSSSAPLIHGLSDLSQVFQPYTLRTRRNSTTIMSRHSLEEGLDMVNRETAHEREMQTAMQISQSWDESLSLSDSDFDKPEKLYSPKRIDFTPVSPAPSPTRGFGKMFVSSSGLPPSPVPSPRRFSRRSQSPVKCIRPSVLGPLKRKGEMETESQPKRLFQGTTNMLSPDAAQLSDLSSCSDILDGSSSSSGLSSDPLAKGSATAESPVACSNSCSSFILMDDLSPK.

The disordered stretch occupies residues 1–23 (MAQEKMELDLEPDTSYGGTLRRS). Ala-2 bears the N-acetylalanine mark. Phosphoserine occurs at positions 25, 33, 50, 58, and 63. Positions 82 to 104 (ISQSWDESLSLSDSDFDKPEKLY) are disordered. The span at 83-94 (SQSWDESLSLSD) shows a compositional bias: low complexity. Thr-112 carries the phosphothreonine modification. Phosphoserine is present on residues Ser-115 and Ser-119. Arg-122 is subject to Omega-N-methylarginine. Disordered stretches follow at residues 129–152 (VSSS…SQSP), 158–177 (PSVL…SQPK), and 202–230 (DILD…SPVA). Phosphoserine occurs at positions 137 and 141. Basic and acidic residues predominate over residues 166-176 (RKGEMETESQP). Residues 202-216 (DILDGSSSSSGLSSD) are compositionally biased toward low complexity.

The protein belongs to the FAM122 family. Isoform 3 and isoform 4 are phosphorylated on Ser-62 and Ser-64.

The sequence is that of PABIR family member 2 from Homo sapiens (Human).